The chain runs to 281 residues: Tumor necrosis factor ligand superfamily member 6 (281 aa).

Topologically, residues methionine 1 to glycine 80 are cytoplasmic. The segment at serine 20–leucine 71 is disordered. The segment covering arginine 43–proline 70 has biased composition (pro residues). Residues leucine 81 to phenylalanine 102 form a helical; Signal-anchor for type II membrane protein membrane-spanning segment. Topologically, residues glutamine 103–leucine 281 are extracellular. Over residues threonine 118 to glutamate 128 the composition is skewed to polar residues. The tract at residues threonine 118–glutamate 142 is disordered. One can recognise a THD domain in the interval lysine 145–leucine 281. The N-linked (GlcNAc...) asparagine glycan is linked to asparagine 184. An intrachain disulfide couples cysteine 202 to cysteine 233. Residues asparagine 250 and asparagine 260 are each glycosylated (N-linked (GlcNAc...) asparagine).

This sequence belongs to the tumor necrosis factor family. In terms of assembly, homotrimer. Interacts with ARHGAP9, BAIAP2L1, BTK, CACNB3, CACNB4, CRK, DLG2, DNMBP, DOCK4, EPS8L3, FGR, FYB1, FYN, HCK, ITK, ITSN2, KALRN, LYN, MACC1, MIA, MPP4, MYO15A, NCF1, NCK1, NCK2, NCKIPSD, OSTF1, PIK3R1, PSTPIP1, RIMBP3C, SAMSN1, SH3GL3, SH3PXD2B, SH3PXD2A, SH3RF2, SKAP2, SNX33, SNX9, SORBS3, SPTA1, SRC, SRGAP1, SRGAP2, SRGAP3, TEC, TJP3 and YES1. The soluble form derives from the membrane form by proteolytic processing. The membrane-bound form undergoes two successive intramembrane proteolytic cleavages. The first one is processed by ADAM10 producing an N-terminal fragment, which lacks the receptor-binding extracellular domain. This ADAM10-processed FasL (FasL APL) remnant form is still membrane anchored and further processed by SPPL2A that liberates the FasL intracellular domain (FasL ICD). FasL shedding by ADAM10 is a prerequisite for subsequent intramembrane cleavage by SPPL2A in T-cells. Post-translationally, N-glycosylated. Glycosylation enhances apoptotic activity. In terms of processing, phosphorylated by FGR on tyrosine residues; this is required for ubiquitination and subsequent internalization. Monoubiquitinated.

The protein localises to the cell membrane. It localises to the cytoplasmic vesicle lumen. The protein resides in the lysosome lumen. It is found in the secreted. Its subcellular location is the nucleus. Cytokine that binds to TNFRSF6/FAS, a receptor that transduces the apoptotic signal into cells. Involved in cytotoxic T-cell-mediated apoptosis, natural killer cell-mediated apoptosis and in T-cell development. Initiates fratricidal/suicidal activation-induced cell death (AICD) in antigen-activated T-cells contributing to the termination of immune responses. TNFRSF6/FAS-mediated apoptosis also has a role in the induction of peripheral tolerance. Binds to TNFRSF6B/DcR3, a decoy receptor that blocks apoptosis. In terms of biological role, induces FAS-mediated activation of NF-kappa-B, initiating non-apoptotic signaling pathways. Can induce apoptosis but does not appear to be essential for this process. Its function is as follows. Cytoplasmic form induces gene transcription inhibition. This chain is Tumor necrosis factor ligand superfamily member 6 (FASLG), found in Homo sapiens (Human).